The chain runs to 532 residues: UDP-N-acetylmuramoylalanine--D-glutamate ligase (532 aa).

Position 124–130 (G124–S130) interacts with ATP.

Belongs to the MurCDEF family.

Its subcellular location is the cytoplasm. The catalysed reaction is UDP-N-acetyl-alpha-D-muramoyl-L-alanine + D-glutamate + ATP = UDP-N-acetyl-alpha-D-muramoyl-L-alanyl-D-glutamate + ADP + phosphate + H(+). It participates in cell wall biogenesis; peptidoglycan biosynthesis. Functionally, cell wall formation. Catalyzes the addition of glutamate to the nucleotide precursor UDP-N-acetylmuramoyl-L-alanine (UMA). This is UDP-N-acetylmuramoylalanine--D-glutamate ligase (murD) from Treponema pallidum (strain Nichols).